Reading from the N-terminus, the 758-residue chain is Matrix metalloproteinase-2 (758 aa).

The signal sequence occupies residues 1–17 (MFSKYVLATLLALFAQS). Residue His-257 participates in Zn(2+) binding. The active site involves Glu-258. Positions 261 and 267 each coordinate Zn(2+). The tract at residues 335–514 (AYWPWNNPSN…HNKPRKPKPD (180 aa)) is disordered. A compositionally biased stretch (low complexity) spans 338 to 348 (PWNNPSNNPNN). Over residues 349–476 (DRNRARERQE…EWERRNRNGA (128 aa)) the composition is skewed to basic and acidic residues. Residues 479–494 (PVTPTANTTPRPTNKP) are compositionally biased toward low complexity. Over residues 499–510 (HRQHHHHNKPRK) the composition is skewed to basic residues. Hemopexin repeat units follow at residues 513–561 (PDSC…WSAL), 565–610 (LTKV…GLPP), 612–659 (LTHI…WSGV), and 660–707 (GYNI…WMQC). Cys-516 and Cys-707 are joined by a disulfide. The chain crosses the membrane as a helical span at residues 739–756 (LRINHFILSILLLAIANW). At 757–758 (RS) the chain is on the cytoplasmic side.

Belongs to the peptidase M10A family. Ca(2+) serves as cofactor. Requires Zn(2+) as cofactor. In terms of tissue distribution, widely expressed during embryogenesis including in the mesoderm, developing gut, central and peripheral nervous systems and imaginal disks. In the embryonic nervous system, expressed in neurons and glia. In third instar larvae, strongly expressed in the morphogenetic furrow of eye imaginal disks and in the optic lobe region of the brain. Expressed in posterior follicle cells in all mature stage 14 follicles but not in earlier follicles and is also expressed in some anterior follicle cells that help form dorsal eggshell structures.

The protein resides in the cell membrane. Has metalloproteinase activity. Proteolytically cleaves the PGRP-LC receptor; involved in gut-fat body innate immunological communication (GFIC)-mediated activation of the imd/Relish signal transduction pathway. Required for larval tissue histolysis during metamorphosis and is involved in pupal head eversion and fusion of the wing imaginal tissue. Required for growth of the dorsal air sac primordium and development of the dorsal air sacs. Promotes embryonic motor axon fasciculation. Cleaves and activates frac to promote motor axon bundling during outgrowth. Promotes the reshaping of adult sensory neuron dendrites from a radial to lattice-like shape which occurs after eclosion by degrading the basement membrane on which the dendrites grow. Involved in inhibition of follicle stem cell proliferation by cleaving Dlp, inhibiting its interaction with wg and preventing Dlp-mediated spreading of wg to follicle stem cells to enhance their proliferation. Plays a role in wound healing. Involved in fat body dissociation which occurs during metamorphosis by degrading basement membrane components, leading to destruction of cell-basement membrane junctions. Required for posterior follicle cell degradation and ovulation. This Drosophila melanogaster (Fruit fly) protein is Matrix metalloproteinase-2.